The sequence spans 354 residues: Cysteine proteinase 1 (354 aa).

Positions 1–24 (MARRNPLLFAIVVTILFVVCYGSA) are cleaved as a signal peptide. A propeptide spans 25–125 (LIAQTPPPVD…HKEDVHVDDS (101 aa)) (activation peptide). 3 disulfides stabilise this stretch: Cys150/Cys191, Cys184/Cys229, and Cys282/Cys330. Residue Cys153 is part of the active site. The N-linked (GlcNAc...) asparagine glycan is linked to Asn208. Active-site residues include His289 and Asn309.

This sequence belongs to the peptidase C1 family.

The cysteine proteinases have a potential role in host-parasite interaction and virulence. The polypeptide is Cysteine proteinase 1 (CYS1) (Leishmania pifanoi).